A 465-amino-acid polypeptide reads, in one-letter code: Tubulin gamma chain (465 aa).

144–150 (AGGTGSG) contacts GTP.

Belongs to the tubulin family.

It is found in the cytoplasm. It localises to the cytoskeleton. Its subcellular location is the microtubule organizing center. The protein resides in the spindle pole body. Functionally, tubulin is the major constituent of microtubules. The gamma chain is found at microtubule organizing centers (MTOC) such as the spindle poles or the centrosome, suggesting that it is involved in the minus-end nucleation of microtubule assembly. The protein is Tubulin gamma chain (TUB4) of Candida glabrata (strain ATCC 2001 / BCRC 20586 / JCM 3761 / NBRC 0622 / NRRL Y-65 / CBS 138) (Yeast).